Reading from the N-terminus, the 200-residue chain is Large ribosomal subunit protein uL4 (200 aa).

Residues 43–71 (RAQKTRAEVSGSGKKPWRQKGTGRARSGD) form a disordered region.

This sequence belongs to the universal ribosomal protein uL4 family. As to quaternary structure, part of the 50S ribosomal subunit.

Functionally, one of the primary rRNA binding proteins, this protein initially binds near the 5'-end of the 23S rRNA. It is important during the early stages of 50S assembly. It makes multiple contacts with different domains of the 23S rRNA in the assembled 50S subunit and ribosome. In terms of biological role, forms part of the polypeptide exit tunnel. The protein is Large ribosomal subunit protein uL4 of Pasteurella multocida (strain Pm70).